The primary structure comprises 403 residues: Multifunctional CCA protein (403 aa).

ATP-binding residues include Gly-8 and Arg-11. Gly-8 and Arg-11 together coordinate CTP. Mg(2+)-binding residues include Asp-21 and Asp-23. Positions 91, 137, and 140 each coordinate ATP. Positions 91, 137, and 140 each coordinate CTP. Positions 228 to 329 constitute an HD domain; the sequence is TGIHTLMVAK…LKVLGLLDVW (102 aa).

The protein belongs to the tRNA nucleotidyltransferase/poly(A) polymerase family. Bacterial CCA-adding enzyme type 1 subfamily. In terms of assembly, monomer. Can also form homodimers and oligomers. Mg(2+) is required as a cofactor. The cofactor is Ni(2+).

It catalyses the reaction a tRNA precursor + 2 CTP + ATP = a tRNA with a 3' CCA end + 3 diphosphate. The catalysed reaction is a tRNA with a 3' CCA end + 2 CTP + ATP = a tRNA with a 3' CCACCA end + 3 diphosphate. In terms of biological role, catalyzes the addition and repair of the essential 3'-terminal CCA sequence in tRNAs without using a nucleic acid template. Adds these three nucleotides in the order of C, C, and A to the tRNA nucleotide-73, using CTP and ATP as substrates and producing inorganic pyrophosphate. tRNA 3'-terminal CCA addition is required both for tRNA processing and repair. Also involved in tRNA surveillance by mediating tandem CCA addition to generate a CCACCA at the 3' terminus of unstable tRNAs. While stable tRNAs receive only 3'-terminal CCA, unstable tRNAs are marked with CCACCA and rapidly degraded. In Vibrio cholerae serotype O1 (strain ATCC 39315 / El Tor Inaba N16961), this protein is Multifunctional CCA protein.